The primary structure comprises 246 residues: Cell division protein ZapD (246 aa).

This sequence belongs to the ZapD family. As to quaternary structure, interacts with FtsZ.

The protein resides in the cytoplasm. Cell division factor that enhances FtsZ-ring assembly. Directly interacts with FtsZ and promotes bundling of FtsZ protofilaments, with a reduction in FtsZ GTPase activity. This is Cell division protein ZapD from Vibrio cholerae serotype O1 (strain ATCC 39541 / Classical Ogawa 395 / O395).